The following is a 273-amino-acid chain: Major prion protein homolog (273 aa).

Residues 1-24 (MARLLTTCCLLALLLAACTDVALS) form the signal peptide. The interval 25 to 121 (KKGKGKPSGG…QKPWKPPKTN (97 aa)) is disordered. 8 tandem repeats follow at residues 42–47 (RQPSYP), 48–53 (RQPGYP), 54–59 (HNPGYP), 60–65 (HNPGYP), 66–71 (HNPGYP), 72–77 (HNPGYP), 78–83 (HNPGYP), and 84–89 (QNPGYP). The 8 X 6 AA tandem repeats of [HR]-[NQ]-P-G-Y-P stretch occupies residues 42–89 (RQPSYPRQPGYPHNPGYPHNPGYPHNPGYPHNPGYPHNPGYPQNPGYP). Over residues 51–94 (GYPHNPGYPHNPGYPHNPGYPHNPGYPHNPGYPQNPGYPHNPGY) the composition is skewed to low complexity. Histidine 66, histidine 72, and histidine 78 together coordinate Cu(2+). Cu(2+) is bound by residues histidine 90 and glycine 93. Residues 101 to 111 (YNPSSGGSYHN) are compositionally biased toward polar residues. Cysteine 192 and cysteine 237 form a disulfide bridge. 3 N-linked (GlcNAc...) asparagine glycosylation sites follow: asparagine 194, asparagine 209, and asparagine 218. Serine 248 carries GPI-anchor amidated serine lipidation. A propeptide spans 249-273 (GIQLHPADTWLAVLLLLLTTLFAMH) (removed in mature form).

It belongs to the prion family. As to quaternary structure, monomer and homodimer. Has a tendency to aggregate into amyloid fibrils containing a cross-beta spine, formed by a steric zipper of superposed beta-strands. Soluble oligomers may represent an intermediate stage on the path to fibril formation. Copper binding may promote oligomerization. In terms of tissue distribution, spinal cord and brain.

The protein resides in the cell membrane. Its function is as follows. Its primary physiological function is unclear. Has cytoprotective activity against internal or environmental stresses. May play a role in neuronal development and synaptic plasticity. May be required for neuronal myelin sheath maintenance. May play a role in iron uptake and iron homeostasis. Soluble oligomers are toxic to cultured neuroblastoma cells and induce apoptosis (in vitro). Association with GPC1 (via its heparan sulfate chains) targets PRNP to lipid rafts. Also provides Cu(2+) or Zn(2+) for the ascorbate-mediated GPC1 deaminase degradation of its heparan sulfate side chains. The sequence is that of Major prion protein homolog (PRNP) from Gallus gallus (Chicken).